Reading from the N-terminus, the 501-residue chain is L-arabinose isomerase (501 aa).

Mn(2+) is bound by residues E306, E333, H350, and H450.

It belongs to the arabinose isomerase family. Homohexamer. Requires Mn(2+) as cofactor.

It carries out the reaction beta-L-arabinopyranose = L-ribulose. It participates in carbohydrate degradation; L-arabinose degradation via L-ribulose; D-xylulose 5-phosphate from L-arabinose (bacterial route): step 1/3. Catalyzes the conversion of L-arabinose to L-ribulose. In Erwinia tasmaniensis (strain DSM 17950 / CFBP 7177 / CIP 109463 / NCPPB 4357 / Et1/99), this protein is L-arabinose isomerase.